A 411-amino-acid chain; its full sequence is Peptidase T (411 aa).

H78 lines the Zn(2+) pocket. D80 is an active-site residue. Residue D140 coordinates Zn(2+). E173 functions as the Proton acceptor in the catalytic mechanism. 3 residues coordinate Zn(2+): E174, D196, and H379.

This sequence belongs to the peptidase M20B family. Zn(2+) is required as a cofactor.

It localises to the cytoplasm. It carries out the reaction Release of the N-terminal residue from a tripeptide.. Cleaves the N-terminal amino acid of tripeptides. The sequence is that of Peptidase T from Yersinia pestis bv. Antiqua (strain Antiqua).